The chain runs to 83 residues: Small ribosomal subunit protein bS16 (83 aa).

It belongs to the bacterial ribosomal protein bS16 family.

This is Small ribosomal subunit protein bS16 from Verminephrobacter eiseniae (strain EF01-2).